The primary structure comprises 101 residues: Small ribosomal subunit protein uS10 (101 aa).

The protein belongs to the universal ribosomal protein uS10 family. In terms of assembly, part of the 30S ribosomal subunit.

Functionally, involved in the binding of tRNA to the ribosomes. The protein is Small ribosomal subunit protein uS10 of Brachyspira pilosicoli (Serpulina pilosicoli).